A 1290-amino-acid chain; its full sequence is 1-phosphatidylinositol 4,5-bisphosphate phosphodiesterase gamma-1 (1290 aa).

An N-acetylalanine modification is found at A2. The region spanning 27 to 142 (RSLEVGTVMT…WIKGLTWLME (116 aa)) is the PH 1 domain. Residues 152 to 187 (QIERWLRKQFYSVDRNREDRISAKDLKNMLSQVNYR) form the EF-hand domain. D165, N167, E169, R171, and D176 together coordinate Ca(2+). Residues 320 to 464 (DTMNNPLSHY…LKRKILIKHK (145 aa)) form the PI-PLC X-box domain. Residues H335 and H380 contribute to the active site. The 35-residue stretch at 489–523 (SIKNGILYLEDPVNHEWYPHYFVLTSSKIYYSEET) folds into the PH 2; first part domain. Y506 is modified (phosphotyrosine). Residues 522–544 (ETSSDQGNEDEEEPKEVSSSTEL) are disordered. SH2 domains follow at residues 550 to 657 (WFHG…SEPV) and 668 to 756 (WYHA…RYPI). At Y771 the chain carries Phosphotyrosine; by SYK. Y775 bears the Phosphotyrosine mark. The residue at position 783 (Y783) is a Phosphotyrosine; by ITK, SYK and TXK. The region spanning 791-851 (TFKCAVKALF…PSNYVEEMVN (61 aa)) is the SH3 domain. In terms of domain architecture, PH 2; second part spans 895-931 (FVFSISMASVAHWSLDVAADSQEELQDWVKKIREVAQ). Residues 953–1070 (LSELVVYCRP…GYVLQPSTMR (118 aa)) enclose the PI-PLC Y-box domain. Y977 is subject to Phosphotyrosine. The region spanning 1071 to 1194 (DEAFDPFDKS…TGYRAVPLKN (124 aa)) is the C2 domain. Phosphoserine occurs at positions 1221, 1222, 1227, 1233, and 1248. Residue Y1253 is modified to Phosphotyrosine. The residue at position 1263 (S1263) is a Phosphoserine. The segment at 1271–1290 (FDSRERRAPRRTRVNGDNRL) is disordered.

Interacts with AGAP2 via its SH3 domain. Interacts (via SH2 domain) with RET. Interacts with FLT1 (tyrosine-phosphorylated). Interacts (via SH2 domain) with FGFR1, FGFR2, FGFR3 and FGFR4 (phosphorylated). Interacts with LAT (phosphorylated) upon TCR activation. Interacts (via SH3 domain) with the Pro-rich domain of TNK1. Associates with BLNK, VAV1, GRB2 and NCK1 in a B-cell antigen receptor-dependent fashion. Interacts with CBLB in activated T-cells; which inhibits phosphorylation. Interacts with SHB. Interacts (via SH3 domain) with the Arg/Gly-rich-flanked Pro-rich domains of KHDRBS1/SAM68. This interaction is selectively regulated by arginine methylation of KHDRBS1/SAM68. Interacts with INPP5D/SHIP1, THEMIS and CLNK. Interacts with AXL, FLT4 and KIT. Interacts with RALGPS1. Interacts (via the SH2 domains) with VIL1 (phosphorylated at C-terminus tyrosine phosphorylation sites). Interacts (via SH2 domain) with PDGFRA and PDGFRB (tyrosine phosphorylated). Interacts with PIP5K1C. Interacts with NTRK1 and NTRK2 (phosphorylated upon ligand-binding). Interacts with SYK; activates PLCG1. Interacts with GRB2, LAT and THEMIS upon TCR activation in thymocytes. Interacts with TESPA1; the association is increased with prolonged stimulation of the TCR and may facilitate the assembly of the LAT signalosome. Interacts (via C-terminal proline-rich domain (PRD)) with PLCG1 (via SH3 domain); this interaction leads to guanine nucleotide exchange from PlCG1 to DNM1 and enhances DNM1-dependent endocytosis. In terms of assembly, (Microbial infection) Interacts (via SH3 domain) with HEV ORF3 protein. Ca(2+) is required as a cofactor. Post-translationally, tyrosine phosphorylated in response to signaling via activated FLT3, KIT and PDGFRA. Tyrosine phosphorylated by activated FGFR1, FGFR2, FGFR3 and FGFR4. Tyrosine phosphorylated by activated FLT1 and KDR. Tyrosine phosphorylated by activated PDGFRB. The receptor-mediated activation of PLCG1 involves its phosphorylation by tyrosine kinases, in response to ligation of a variety of growth factor receptors and immune system receptors. For instance, SYK phosphorylates and activates PLCG1 in response to ligation of the B-cell receptor. May be dephosphorylated by PTPRJ. Phosphorylated by ITK and TXK on Tyr-783 upon TCR activation in T-cells. Ubiquitinated by CBLB in activated T-cells.

The protein localises to the cell projection. It localises to the lamellipodium. It is found in the ruffle. It carries out the reaction a 1,2-diacyl-sn-glycero-3-phospho-(1D-myo-inositol-4,5-bisphosphate) + H2O = 1D-myo-inositol 1,4,5-trisphosphate + a 1,2-diacyl-sn-glycerol + H(+). The enzyme catalyses a 1,2-diacyl-sn-glycero-3-phospho-(1D-myo-inositol) + H2O = 1D-myo-inositol 1-phosphate + a 1,2-diacyl-sn-glycerol + H(+). With respect to regulation, activated by phosphorylation on tyrosine residues. Its function is as follows. Mediates the production of the second messenger molecules diacylglycerol (DAG) and inositol 1,4,5-trisphosphate (IP3). Plays an important role in the regulation of intracellular signaling cascades. Becomes activated in response to ligand-mediated activation of receptor-type tyrosine kinases, such as PDGFRA, PDGFRB, EGFR, FGFR1, FGFR2, FGFR3 and FGFR4. Plays a role in actin reorganization and cell migration. Guanine nucleotide exchange factor that binds the GTPase DNM1 and catalyzes the dissociation of GDP, allowing a GTP molecule to bind in its place, therefore enhancing DNM1-dependent endocytosis. In Homo sapiens (Human), this protein is 1-phosphatidylinositol 4,5-bisphosphate phosphodiesterase gamma-1.